Reading from the N-terminus, the 445-residue chain is MITLRKLPLAVAVAAGVMSAQAMAVDFHGYARSGIGWTGSGGEQQCFQTTGAQSKYRLGNECETYAELKLGQEVWKEGDKSFYFDTNVAYSVAQQNDWEATDPAFREANVQGKNLIEWLPGSTIWAGKRFYQRHDVHMIDFYYWDISGPGAGLENIDVGFGKLSLAATRSSEAGGSSSFASNNIYDYTNETANDVFDVRLAQMEINPGGTLELGVDYGRANLRDNYRLVDGASKDGWLFTAEHTQSVLKGFNKFVVQYATDSMTSQGKGLSQGSGVAFDNEKFAYNINNNGHMLRILDHGAISMGDNWDMMYVGMYQDINWDNDNGTKWWTVGIRPMYKWTPIMSTVMEIGYDNVESQRTGDKNNQYKITLAQQWQAGDSIWSRPAIRVFATYAKWDEKWGYDYNGDSKVNPNYGKAVPADFNGGSFGRGDSDEWTFGAQMEIWW.

The N-terminal stretch at 1 to 24 is a signal peptide; it reads MITLRKLPLAVAVAAGVMSAQAMA.

It belongs to the porin LamB (TC 1.B.3) family. Homotrimer formed of three 18-stranded antiparallel beta-barrels, containing three independent channels.

The protein resides in the cell outer membrane. The catalysed reaction is beta-maltose(in) = beta-maltose(out). In terms of biological role, involved in the transport of maltose and maltodextrins. The protein is Maltoporin of Shigella flexneri.